The sequence spans 242 residues: Large ribosomal subunit protein uL1 (242 aa).

The protein belongs to the universal ribosomal protein uL1 family. Part of the 50S ribosomal subunit.

Binds directly to 23S rRNA. The L1 stalk is quite mobile in the ribosome, and is involved in E site tRNA release. Functionally, protein L1 is also a translational repressor protein, it controls the translation of the L11 operon by binding to its mRNA. The sequence is that of Large ribosomal subunit protein uL1 from Persephonella marina (strain DSM 14350 / EX-H1).